The following is a 217-amino-acid chain: Cytidylate kinase (217 aa).

21 to 29 is a binding site for ATP; sequence GPAASGKGT.

Belongs to the cytidylate kinase family. Type 1 subfamily.

The protein resides in the cytoplasm. The enzyme catalyses CMP + ATP = CDP + ADP. It catalyses the reaction dCMP + ATP = dCDP + ADP. The protein is Cytidylate kinase of Rickettsia bellii (strain OSU 85-389).